The chain runs to 610 residues: Butyryl-CoA dehydrogenase Swol_2052 (610 aa).

The active-site Proton acceptor is the E451.

It belongs to the acyl-CoA dehydrogenase family. Requires FAD as cofactor.

Its subcellular location is the cytoplasm. It catalyses the reaction butanoyl-CoA + oxidized [electron-transfer flavoprotein] + H(+) = (2E)-butenoyl-CoA + reduced [electron-transfer flavoprotein]. The catalysed reaction is a short-chain 2,3-saturated fatty acyl-CoA + oxidized [electron-transfer flavoprotein] + H(+) = a short-chain (2E)-enoyl-CoA + reduced [electron-transfer flavoprotein]. It functions in the pathway lipid metabolism; butanoate metabolism. In terms of biological role, involved in syntrophic growth of S.wolfei with butyrate, as part of the butyrate oxidation pathway. Catalyzes the oxidation of butanoyl-CoA to crotonyl-CoA. Probably passes the electrons released by this reaction on to electron-transfer flavoproteins (EtfAB) to finally generate hydrogen and/or formate. The protein is Butyryl-CoA dehydrogenase Swol_2052 of Syntrophomonas wolfei subsp. wolfei (strain DSM 2245B / Goettingen).